The sequence spans 97 residues: MAARMGVLSVAGFRAAARAGGLLARPKQSTAVVPCRTVIASSAGAILPKPEKVSFGLLRVFTVVIPFLYIGTLISKNFAAVLEEHDIFVPEDDDDDD.

The transit peptide at methionine 1 to threonine 37 directs the protein to the mitochondrion. Residues valine 38–phenylalanine 55 are Mitochondrial matrix-facing. Residues glycine 56–serine 75 form a helical membrane-spanning segment. The Mitochondrial intermembrane portion of the chain corresponds to lysine 76–aspartate 97.

The protein belongs to the SMDT1/EMRE family. As to quaternary structure, component of the uniplex complex.

The protein localises to the mitochondrion inner membrane. Its function is as follows. Essential regulatory subunit of the mitochondrial calcium uniporter complex (uniplex), a complex that mediates calcium uptake into mitochondria. Required to bridge the calcium-sensing proteins micu1 with the calcium-conducting subunit mcu. Acts by mediating activation of mcu and retention of micu1 to the mcu pore, in order to ensure tight regulation of the uniplex complex and appropriate responses to intracellular calcium signaling. This Xenopus laevis (African clawed frog) protein is Essential MCU regulator, mitochondrial.